Consider the following 172-residue polypeptide: MKRDKKELIVQQVTEKLEKAQGIYLTDFQGLDVAKMAELRNEFRKVGVEYRVVKNTLVKKALENVAGGDRLAEGLYNTTGVAIGYDDPIVAAKVIEKFSKKNENLKFKMAAIDGSVFEASQLPQLASMLSKVENIGRVAGLVNNMVASVPMVVNAVMRDLVSVLDQVAKQKQ.

This sequence belongs to the universal ribosomal protein uL10 family. As to quaternary structure, part of the ribosomal stalk of the 50S ribosomal subunit. The N-terminus interacts with L11 and the large rRNA to form the base of the stalk. The C-terminus forms an elongated spine to which L12 dimers bind in a sequential fashion forming a multimeric L10(L12)X complex.

Its function is as follows. Forms part of the ribosomal stalk, playing a central role in the interaction of the ribosome with GTP-bound translation factors. The sequence is that of Large ribosomal subunit protein uL10 from Prosthecochloris aestuarii (strain DSM 271 / SK 413).